The following is a 1386-amino-acid chain: DNA-directed RNA polymerase subunit beta'' (1386 aa).

Zn(2+) contacts are provided by C220, C289, C296, and C299.

It belongs to the RNA polymerase beta' chain family. RpoC2 subfamily. As to quaternary structure, in plastids the minimal PEP RNA polymerase catalytic core is composed of four subunits: alpha, beta, beta', and beta''. When a (nuclear-encoded) sigma factor is associated with the core the holoenzyme is formed, which can initiate transcription. Requires Zn(2+) as cofactor.

It is found in the plastid. The protein localises to the chloroplast. The enzyme catalyses RNA(n) + a ribonucleoside 5'-triphosphate = RNA(n+1) + diphosphate. In terms of biological role, DNA-dependent RNA polymerase catalyzes the transcription of DNA into RNA using the four ribonucleoside triphosphates as substrates. This chain is DNA-directed RNA polymerase subunit beta'', found in Marchantia polymorpha (Common liverwort).